A 652-amino-acid chain; its full sequence is Acetyl-coenzyme A synthetase (652 aa).

Residues R189 to K192 and T311 each bind CoA. ATP-binding positions include G387–P389, D411–T416, D500, and R515. A CoA-binding site is contributed by S523. An ATP-binding site is contributed by R526. Mg(2+) contacts are provided by H539 and V542. Residue R584 participates in CoA binding. K609 is modified (N6-acetyllysine).

This sequence belongs to the ATP-dependent AMP-binding enzyme family. Mg(2+) serves as cofactor. Acetylated. Deacetylation by the SIR2-homolog deacetylase activates the enzyme.

It carries out the reaction acetate + ATP + CoA = acetyl-CoA + AMP + diphosphate. Its function is as follows. Catalyzes the conversion of acetate into acetyl-CoA (AcCoA), an essential intermediate at the junction of anabolic and catabolic pathways. AcsA undergoes a two-step reaction. In the first half reaction, AcsA combines acetate with ATP to form acetyl-adenylate (AcAMP) intermediate. In the second half reaction, it can then transfer the acetyl group from AcAMP to the sulfhydryl group of CoA, forming the product AcCoA. The polypeptide is Acetyl-coenzyme A synthetase (Bartonella bacilliformis (strain ATCC 35685 / KC583 / Herrer 020/F12,63)).